We begin with the raw amino-acid sequence, 181 residues long: uncharacterized protein (181 aa).

This is an uncharacterized protein from Borreliella burgdorferi (strain ATCC 35210 / DSM 4680 / CIP 102532 / B31) (Borrelia burgdorferi).